The sequence spans 82 residues: Small ribosomal subunit protein uS17 (82 aa).

This sequence belongs to the universal ribosomal protein uS17 family. In terms of assembly, part of the 30S ribosomal subunit.

Its function is as follows. One of the primary rRNA binding proteins, it binds specifically to the 5'-end of 16S ribosomal RNA. The sequence is that of Small ribosomal subunit protein uS17 from Sulfurimonas denitrificans (strain ATCC 33889 / DSM 1251) (Thiomicrospira denitrificans (strain ATCC 33889 / DSM 1251)).